The following is a 344-amino-acid chain: N-acetyl-gamma-glutamyl-phosphate reductase (344 aa).

Cys-149 is an active-site residue.

Belongs to the NAGSA dehydrogenase family. Type 1 subfamily.

It localises to the cytoplasm. It carries out the reaction N-acetyl-L-glutamate 5-semialdehyde + phosphate + NADP(+) = N-acetyl-L-glutamyl 5-phosphate + NADPH + H(+). Its pathway is amino-acid biosynthesis; L-arginine biosynthesis; N(2)-acetyl-L-ornithine from L-glutamate: step 3/4. Its function is as follows. Catalyzes the NADPH-dependent reduction of N-acetyl-5-glutamyl phosphate to yield N-acetyl-L-glutamate 5-semialdehyde. The chain is N-acetyl-gamma-glutamyl-phosphate reductase from Thermoanaerobacter pseudethanolicus (strain ATCC 33223 / 39E) (Clostridium thermohydrosulfuricum).